The following is a 302-amino-acid chain: Stanniocalcin-2 (302 aa).

An N-terminal signal peptide occupies residues 1–24 (MCAERLGQFMTLALVLATFDPARG). A disordered region spans residues 23 to 44 (RGTDATNPPEGPQDRSPQQKGR). Residues Asn-73 and Asn-74 are each glycosylated (N-linked (GlcNAc...) asparagine). The segment at 217 to 302 (RPPTAPPERQ…EQSEYSDIRR (86 aa)) is disordered. Basic and acidic residues predominate over residues 227–264 (PQVDRTKLSRAHHGEAGHHLPEPSSRETGRGAKGERGS). Phosphoserine is present on residues Ser-250 and Ser-251. The residue at position 254 (Thr-254) is a Phosphothreonine.

The protein belongs to the stanniocalcin family. As to quaternary structure, homodimer; disulfide-linked.

Its subcellular location is the secreted. Has an anti-hypocalcemic action on calcium and phosphate homeostasis. This Pongo abelii (Sumatran orangutan) protein is Stanniocalcin-2 (STC2).